A 42-amino-acid chain; its full sequence is Photosystem I reaction center subunit IX (42 aa).

The helical transmembrane segment at 7 to 27 (YLSVAPVLSTLWFVSLAGLLI) threads the bilayer.

It belongs to the PsaJ family.

The protein resides in the plastid. It localises to the chloroplast thylakoid membrane. May help in the organization of the PsaE and PsaF subunits. The protein is Photosystem I reaction center subunit IX of Capsella bursa-pastoris (Shepherd's purse).